The following is a 536-amino-acid chain: MRDIEEILHEMGLSKDDYELYGRYMAKLSLNLQEVNKKKAKLILVTAMTPTAAGEGKTTTTIGLGQAFKKLGKNVAIAIREPSLGPCFGIKGGATGGGKSKVEPSDRINLLFTGDFPAISAAHNLLSAMINNHIYHGNELNLDPKRITFPRTIDMNDRSLRSIVVGVGPRDMGAIANDNFVITPASEVMAITGLSLNYKDLKEKLSRILAGFTVKNKPVFAADLKAEGSMAALLRDALKPNLVQTTEGVPAFVHTGPFGNIAHGTSSIVADRIAMNLFDYVITEAGFGSDLGAEKFFNIVSRIGNLPINAVVLVATIRALKLHGGSKKQGEDVEAVKEGSKNLLRHVANIRKFGVEPVVALNKFPTDTENEIMAIGEILDSHGIKWALSEVFEKGGEGGIELANKVLSSIGDYQIKRTYEVREDLKTKIEKIAVNVYGADGVIFEKKALNDLKKAEEIMNDPYVCMAKTQYSFSDDASLLNDPHGFKVRVQSVNISSGAGFVVPILGEIMTMPGLPKRPAAENIDLAEDGEITGLF.

51–58 (TAAGEGKT) is an ATP binding site.

Belongs to the formate--tetrahydrofolate ligase family.

The catalysed reaction is (6S)-5,6,7,8-tetrahydrofolate + formate + ATP = (6R)-10-formyltetrahydrofolate + ADP + phosphate. The protein operates within one-carbon metabolism; tetrahydrofolate interconversion. The polypeptide is Formate--tetrahydrofolate ligase (Thermoplasma volcanium (strain ATCC 51530 / DSM 4299 / JCM 9571 / NBRC 15438 / GSS1)).